We begin with the raw amino-acid sequence, 478 residues long: Adenosylhomocysteinase (478 aa).

Residues Thr67, Asp144, and Glu204 each coordinate substrate. 205–207 (TTT) is a binding site for NAD(+). Substrate is bound by residues Lys234 and Asp238. Residues Asn239, 268–273 (GYGDVG), Glu291, Asn326, 347–349 (IGH), and Asn392 contribute to the NAD(+) site.

It belongs to the adenosylhomocysteinase family. Requires NAD(+) as cofactor.

It localises to the cytoplasm. It carries out the reaction S-adenosyl-L-homocysteine + H2O = L-homocysteine + adenosine. It functions in the pathway amino-acid biosynthesis; L-homocysteine biosynthesis; L-homocysteine from S-adenosyl-L-homocysteine: step 1/1. Its function is as follows. May play a key role in the regulation of the intracellular concentration of adenosylhomocysteine. In Nitrosomonas eutropha (strain DSM 101675 / C91 / Nm57), this protein is Adenosylhomocysteinase.